Here is a 953-residue protein sequence, read N- to C-terminus: MSSRRLGSSRARGRDLAHEVKHFGGLTKHLKKIIFDSNNCLTELKTSDHFEEEVISTLVLPPVADEIVGKVTKNPPALVIFGQTYTSKATLVNKIFREDLFQIVDDSDNNKTWRAVHLKYGSQRNTRLTLTNSFELLNEEPGSPVMRNSWTGIPRVEMLVKEEHQKDACMLSATTEATLNHPLLQCKLQILVTPHNCPGISISQAYNVCTHNVLPVLLYCFDKDQLSEENLRDLQELQNCAGTLPILFVDCREPSEPLVAHRERRLVEDAHEDFDDDSAYDTDERIEGERERHNGLDARLRRRCRPTPNDRPSVIDQLSRAGFISSPEENGRMRGVLDVFTIVNQVEDLHNSAAIVQFIRRSLQYYLIRCCTAMHDLHQHCMNLFITTAFDMQRDILVTPKRIEYARQRENELFDSLKDLTNQKQEQLRSLIQSTVADMTEDLLEQAGNYRFTDLEVSQEGKIQSQKDIKRCTEQIQDLVLARLNACVVEKLIGSVELLRESFLGTLQRCLASLEKIDGDLETSTTVALRQILNAAYQVEVSVRTSSSVVRIIWERMKEFFQSIKPFKTPTRVDTEWKRKVAQTMINNLDESKLAKSICSQFRSRLNNSHESFSTSLRQLEQKHSGRLEKTEEQRMKVRKVYAPRLARLALESTSLRDMVLYGMPKLEREIGRGQYGVVYSCRSWGGVTHCAVKSVVPPDDKHWNDLAMEFHYTRSIAEHDRIVAVIGSVIDHGYGGMGCSPAVLLLMERMQRDLHTAIKANMELPERLHVALDVAEGVRYLHSLGLVHRDIKLKNVLLDKHDRGKITDLGFCKPEAMMSGSIVGTPIHMAPELFSGKYDNSVDTYAFGILLWYVCAGHVKLPQAFEQCANKDHLWTSVKKGVRPERLRPQFDDASWNLMKSSWAGEPSERPLLGEVQSKLQDIYTKALAKREAEGGGGGGAKEQQNLKSDTL.

The region spanning 665–926 is the Protein kinase domain; the sequence is PKLEREIGRG…VQSKLQDIYT (262 aa). Residues 671 to 679 and Lys694 each bind ATP; that span reads IGRGQYGVV. Asp791 functions as the Proton acceptor in the catalytic mechanism. The tract at residues 932 to 953 is disordered; sequence REAEGGGGGGAKEQQNLKSDTL.

This sequence belongs to the protein kinase superfamily. Ser/Thr protein kinase family.

It is found in the cytoplasm. It localises to the cell membrane. The protein localises to the apical cell membrane. The protein resides in the basolateral cell membrane. Its subcellular location is the cell junction. The enzyme catalyses L-seryl-[protein] + ATP = O-phospho-L-seryl-[protein] + ADP + H(+). It carries out the reaction L-threonyl-[protein] + ATP = O-phospho-L-threonyl-[protein] + ADP + H(+). The catalysed reaction is L-tyrosyl-[protein] + ATP = O-phospho-L-tyrosyl-[protein] + ADP + H(+). Functionally, may act as a positive regulator of ERK phosphorylation downstream of fibroblast growth factor-receptor activation. May induce both caspase-dependent apoptosis and caspase-independent cell death. May play a role in the embryonic development. This is Dual serine/threonine and tyrosine protein kinase from Strongylocentrotus purpuratus (Purple sea urchin).